Here is a 660-residue protein sequence, read N- to C-terminus: MVVLISSTVTICNVKPKLEDGNFRVSRLIHRPEVPFFSGLSNEKKKKCAVSVMCLAVKKEQVVQSVESVNGTIFPKKSKNLIMSEGRDEDEDYGKIICPGCGIFMQDNDPDLPGYYQKRKVIANNLEGDEHVENDELAGFEMVDDDADEEEEGEDDEMDDEIKNAIEGSNSESESGFEWESDEWEEKKEVNDVELDGFAPAGVGYGNVTEEKEKKKRVSKTERKKIAREEAKKDNYDDVTVCARCHSLRNYGQVKNQAAENLLPDFDFDRLISTRLIKPMSNSSTTVVVMVVDCVDFDGSFPKRAAKSLFQVLQKAENDPKGSKNLPKLVLVATKVDLLPTQISPARLDRWVRHRAKAGGAPKLSGVYMVSARKDIGVKNLLAYIKELAGPRGNVWVIGAQNAGKSTLINALSKKDGAKVTRLTEAPVPGTTLGILKIGGILSAKAKMYDTPGLLHPYLMSLRLNSEERKMVEIRKEVQPRSYRVKAGQSVHIGGLVRLDLVSASVETIYITIWASHSVSLHLGKTENAEEIFKGHSGLRLQPPIGENRASELGTWEEKEIQVSGNSWDVKSIDISVAGLGWLSLGLKGAATLALWTYQGIDVTLREPLVIDRAPYLERPGFWLPKAITEVLGTHSSKLVDARRRKKQQDSTDFLSDSVA.

A chloroplast-targeting transit peptide spans 1–53; that stretch reads MVVLISSTVTICNVKPKLEDGNFRVSRLIHRPEVPFFSGLSNEKKKKCAVSVM. 2 disordered regions span residues 127–158 and 191–212; these read EGDE…DDEM and NDVE…TEEK. Residues 130 to 158 are compositionally biased toward acidic residues; sequence EHVENDELAGFEMVDDDADEEEEGEDDEM. In terms of domain architecture, CP-type G spans 273–457; it reads STRLIKPMSN…MYDTPGLLHP (185 aa).

The protein belongs to the TRAFAC class YlqF/YawG GTPase family. Binds to chloroplast 16S and 23S ribosomal RNAs. As to expression, mostly expressed in stems, petioles, leaves and flowers and, at low levels, also in roots.

The protein resides in the plastid. Its subcellular location is the chloroplast stroma. Functionally, required for brassinosteroid- (BR) mediated post-transcriptional and translational regulation in the chloroplast, including accumulation of chloroplast rRNA. Involved in chloroplast differentiation. This Arabidopsis thaliana (Mouse-ear cress) protein is GTP-binding protein BRASSINAZOLE INSENSITIVE PALE GREEN 2, chloroplastic.